Here is a 255-residue protein sequence, read N- to C-terminus: Tryptophan synthase alpha chain (255 aa).

Residues E44 and D55 each act as proton acceptor in the active site.

This sequence belongs to the TrpA family. In terms of assembly, tetramer of two alpha and two beta chains.

It catalyses the reaction (1S,2R)-1-C-(indol-3-yl)glycerol 3-phosphate + L-serine = D-glyceraldehyde 3-phosphate + L-tryptophan + H2O. It participates in amino-acid biosynthesis; L-tryptophan biosynthesis; L-tryptophan from chorismate: step 5/5. Functionally, the alpha subunit is responsible for the aldol cleavage of indoleglycerol phosphate to indole and glyceraldehyde 3-phosphate. The polypeptide is Tryptophan synthase alpha chain (Dehalococcoides mccartyi (strain ATCC BAA-2100 / JCM 16839 / KCTC 5957 / BAV1)).